The sequence spans 172 residues: Ribosome maturation factor RimM (172 aa).

One can recognise a PRC barrel domain in the interval 96-168 (DGEFYYHEII…RIEVELMEGL (73 aa)).

This sequence belongs to the RimM family. In terms of assembly, binds ribosomal protein uS19.

It is found in the cytoplasm. Its function is as follows. An accessory protein needed during the final step in the assembly of 30S ribosomal subunit, possibly for assembly of the head region. Essential for efficient processing of 16S rRNA. May be needed both before and after RbfA during the maturation of 16S rRNA. It has affinity for free ribosomal 30S subunits but not for 70S ribosomes. This chain is Ribosome maturation factor RimM, found in Streptococcus thermophilus (strain ATCC BAA-491 / LMD-9).